Consider the following 294-residue polypeptide: 4-diphosphocytidyl-2-C-methyl-D-erythritol kinase (294 aa).

Residue Lys-23 is part of the active site. Position 106 to 116 (106 to 116) interacts with ATP; that stretch reads PMGGGLGGGSS. Asp-148 is a catalytic residue.

This sequence belongs to the GHMP kinase family. IspE subfamily.

It carries out the reaction 4-CDP-2-C-methyl-D-erythritol + ATP = 4-CDP-2-C-methyl-D-erythritol 2-phosphate + ADP + H(+). It participates in isoprenoid biosynthesis; isopentenyl diphosphate biosynthesis via DXP pathway; isopentenyl diphosphate from 1-deoxy-D-xylulose 5-phosphate: step 3/6. In terms of biological role, catalyzes the phosphorylation of the position 2 hydroxy group of 4-diphosphocytidyl-2C-methyl-D-erythritol. This is 4-diphosphocytidyl-2-C-methyl-D-erythritol kinase from Nitrosospira multiformis (strain ATCC 25196 / NCIMB 11849 / C 71).